The chain runs to 227 residues: NAD(P)H-hydrate epimerase (227 aa).

Residues 12 to 221 (SRLVDELAIA…DIGVPRALLE (210 aa)) enclose the YjeF N-terminal domain. 59-63 (NNGGD) is a binding site for (6S)-NADPHX. K(+) is bound by residues Asn60 and Asp131. Residues 135 to 141 (GTGATGE) and Asp164 each bind (6S)-NADPHX. Thr167 lines the K(+) pocket.

This sequence belongs to the NnrE/AIBP family. The cofactor is K(+).

The enzyme catalyses (6R)-NADHX = (6S)-NADHX. It catalyses the reaction (6R)-NADPHX = (6S)-NADPHX. Functionally, catalyzes the epimerization of the S- and R-forms of NAD(P)HX, a damaged form of NAD(P)H that is a result of enzymatic or heat-dependent hydration. This is a prerequisite for the S-specific NAD(P)H-hydrate dehydratase to allow the repair of both epimers of NAD(P)HX. The chain is NAD(P)H-hydrate epimerase from Pirellula staleyi (strain ATCC 27377 / DSM 6068 / ICPB 4128) (Pirella staleyi).